The chain runs to 108 residues: MADKVIALACAAGMSTSLLVSKMQKAAADNGKDYEIFAKSTADIDNMLAGTGSPKPDVLLLGPQVAFMKGEVAKKAEIAGVPMDVIKMQDYGMMRGDKVLAAAENLMN.

Residues 3–108 enclose the PTS EIIB type-3 domain; sequence DKVIALACAA…VLAAAENLMN (106 aa). Residue Cys10 is the Phosphocysteine intermediate of the active site. Cys10 is subject to Phosphocysteine; by EIIA.

It carries out the reaction D-cellobiose(out) + N(pros)-phospho-L-histidyl-[protein] = 6-phospho-beta-D-glucosyl-(1-&gt;4)-D-glucose(in) + L-histidyl-[protein]. The phosphoenolpyruvate-dependent sugar phosphotransferase system (sugar PTS), a major carbohydrate active transport system, catalyzes the phosphorylation of incoming sugar substrates concomitantly with their translocation across the cell membrane. Involved in cellobiose transport with PtcA and CelB. This system can also transport lactose. In Lactococcus lactis subsp. lactis (strain IL1403) (Streptococcus lactis), this protein is PTS system cellobiose-specific EIIB component.